Here is a 209-residue protein sequence, read N- to C-terminus: Large ribosomal subunit protein uL3 (209 aa).

The disordered stretch occupies residues 130 to 154 (RGPMSHGSKFHRAVGSMGASSDPSR).

Belongs to the universal ribosomal protein uL3 family. As to quaternary structure, part of the 50S ribosomal subunit. Forms a cluster with proteins L14 and L19.

One of the primary rRNA binding proteins, it binds directly near the 3'-end of the 23S rRNA, where it nucleates assembly of the 50S subunit. The polypeptide is Large ribosomal subunit protein uL3 (Clostridium kluyveri (strain NBRC 12016)).